The primary structure comprises 980 residues: Vacuolar protein sorting-associated protein 11 homolog (980 aa).

One copy of the CHCR repeat lies at 407 to 554; that stretch reads YKETIGMLEP…GRDLLIHARD (148 aa). The segment at 803-843 adopts an RING-type; atypical zinc-finger fold; the sequence is CSACDTPLQLPTVHFLCKHAYHVHCFESYNMDGSDKCPACQ. Basic and acidic residues predominate over residues 886-898; it reads TKKTKKSEAKKDP. The tract at residues 886-980 is disordered; sequence TKKTKKSEAK…APAPSTNPFD (95 aa). Composition is skewed to polar residues over residues 917–937 and 947–960; these read TTIS…SRQR and TNPF…TRLS.

Belongs to the VPS11 family. Probable core component of at least two putative endosomal tethering complexes, the homotypic fusion and vacuole protein sorting (HOPS) complex and the class C core vacuole/endosome tethering (CORVET) complex. Their common core is composed of the class C Vps proteins vps-11, vps-16 and vps-18, which in HOPS further associates with vps-33.1, vps-39 and vps-41 and in CORVET with vps-8 and vps-33.2.

The protein resides in the late endosome membrane. It is found in the lysosome membrane. Functionally, plays a role in vesicle-mediated protein trafficking to lysosomal compartments including the endocytic membrane transport pathways. Believed to act as a core component of the putative HOPS and CORVET endosomal tethering complexes which are proposed to be involved in the rab-5-to-rab-7 endosome conversion probably implicating sand-1, and via binding SNAREs and SNARE complexes to mediate tethering and docking events during SNARE-mediated membrane fusion. The HOPS complex is proposed to be recruited to Rab7 on the late endosomal membrane and to regulate late endocytic, phagocytic and autophagic traffic towards lysosomes. Within the HOPS complex, contributes to the normal development of gut granules in embryonic and adult intestinal cells. The CORVET complex is proposed to function as a Rab5 effector to mediate early endosome fusion probably in specific endosome subpopulations. Required for fusion of endosomes and autophagosomes with lysosomes. Involved in cargo transport from early to late endosomes and required for the transition from early to late endosomes. Possibly has a role in clearance of apoptotic cells during programmed cell death. This chain is Vacuolar protein sorting-associated protein 11 homolog, found in Caenorhabditis elegans.